A 1367-amino-acid polypeptide reads, in one-letter code: Mediator of RNA polymerase II transcription subunit 23 (1367 aa).

Positions 1343-1367 (PPQALSSGSPAPQANQVPTALPVTQ) are disordered. Polar residues predominate over residues 1346–1367 (ALSSGSPAPQANQVPTALPVTQ).

This sequence belongs to the Mediator complex subunit 23 family. In terms of assembly, component of the Mediator complex, which is composed of MED1, MED4, MED6, MED7, MED8, MED9, MED10, MED11, MED12, MED13, MED13L, MED14, MED15, MED16, MED17, MED18, MED19, MED20, MED21, MED22, MED23, MED24, MED25, MED26, MED27, MED29, MED30, MED31, CCNC, CDK8 and CDC2L6/CDK11. The MED12, MED13, CCNC and CDK8 subunits form a distinct module termed the CDK8 module. Mediator containing the CDK8 module is less active than Mediator lacking this module in supporting transcriptional activation. Individual preparations of the Mediator complex lacking one or more distinct subunits have been variously termed ARC, CRSP, DRIP, PC2, SMCC and TRAP. Interacts with CDK8, CEBPB, CTNNB1, ELK1 and GLI3. Interacts with the adenovirus E1A protein.

The protein resides in the nucleus. Its function is as follows. Component of the Mediator complex, a coactivator involved in the regulated transcription of nearly all RNA polymerase II-dependent genes. Mediator functions as a bridge to convey information from gene-specific regulatory proteins to the basal RNA polymerase II transcription machinery. Mediator is recruited to promoters by direct interactions with regulatory proteins and serves as a scaffold for the assembly of a functional pre-initiation complex with RNA polymerase II and the general transcription factors. Also required for transcriptional activation subsequent to the assembly of the pre-initiation complex. Required for transcriptional activation by adenovirus E1A protein. Required for ELK1-dependent transcriptional activation in response to activated Ras signaling. This chain is Mediator of RNA polymerase II transcription subunit 23 (Med23), found in Rattus norvegicus (Rat).